The primary structure comprises 415 residues: Serine hydroxymethyltransferase (415 aa).

(6S)-5,6,7,8-tetrahydrofolate contacts are provided by residues Leu122 and 126-128 (GHL). At Lys230 the chain carries N6-(pyridoxal phosphate)lysine.

This sequence belongs to the SHMT family. Homodimer. It depends on pyridoxal 5'-phosphate as a cofactor.

The protein resides in the cytoplasm. The enzyme catalyses (6R)-5,10-methylene-5,6,7,8-tetrahydrofolate + glycine + H2O = (6S)-5,6,7,8-tetrahydrofolate + L-serine. The protein operates within one-carbon metabolism; tetrahydrofolate interconversion. Its pathway is amino-acid biosynthesis; glycine biosynthesis; glycine from L-serine: step 1/1. In terms of biological role, catalyzes the reversible interconversion of serine and glycine with tetrahydrofolate (THF) serving as the one-carbon carrier. This reaction serves as the major source of one-carbon groups required for the biosynthesis of purines, thymidylate, methionine, and other important biomolecules. Also exhibits THF-independent aldolase activity toward beta-hydroxyamino acids, producing glycine and aldehydes, via a retro-aldol mechanism. In Leptothrix cholodnii (strain ATCC 51168 / LMG 8142 / SP-6) (Leptothrix discophora (strain SP-6)), this protein is Serine hydroxymethyltransferase.